The chain runs to 245 residues: MDCLQMVFKLFPNWKREAEVKKLVAGYKVHGDPFSTNTRRVLAVLHEKRLSYEPITVKLQTGEHKTEPFLSLNPFGQVPVFEDGSVKLYESRAITQYIAYVHSSRGTQLLNLRSHETMATLTMWMEIEAHQFDPPASKLTWEQVIKPIYGLETDQTIVKENEAILEKVLNIYEKRLEESRFLACNSFTLVDLHHLPNIQYLLGTPTKKLFEKRSKVRKWVDEITSREAWKMACDQEKSWFNKPRN.

The 82-residue stretch at 25-106 (AGYKVHGDPF…YIAYVHSSRG (82 aa)) folds into the GST N-terminal domain. Residues 35–36 (ST), 64–65 (HK), 77–78 (QV), and 90–91 (ES) contribute to the glutathione site. One can recognise a GST C-terminal domain in the interval 114–244 (SHETMATLTM…QEKSWFNKPR (131 aa)).

Belongs to the GST superfamily. Phi family.

The protein resides in the cytoplasm. It is found in the cytosol. It carries out the reaction RX + glutathione = an S-substituted glutathione + a halide anion + H(+). May be involved in the conjugation of reduced glutathione to a wide number of exogenous and endogenous hydrophobic electrophiles and have a detoxification role against certain herbicides. In Arabidopsis thaliana (Mouse-ear cress), this protein is Glutathione S-transferase F4 (GSTF4).